The primary structure comprises 353 residues: uncharacterized protein (353 aa).

The signal sequence occupies residues 1-18 (MKFVLFAQLAAVAAPAIA). Residues 94-119 (EGGNVRRVPGGPSQSARQIGDSSTPM) form a disordered region. Positions 105 to 119 (PSQSARQIGDSSTPM) are enriched in polar residues. 2 N-linked (GlcNAc...) asparagine glycosylation sites follow: asparagine 165 and asparagine 312.

This sequence belongs to the glycosyl hydrolase 3 family.

It localises to the secreted. This is an uncharacterized protein from Arthroderma benhamiae (strain ATCC MYA-4681 / CBS 112371) (Trichophyton mentagrophytes).